We begin with the raw amino-acid sequence, 450 residues long: MTHIKFDYSKALRFFEERELDYLEPAVKAAHDSLHNGTGAGNDALGWINLPTDYDKEEFARIKKATEKIHSDSDVLIVIGIGGSYLGARAAIETLNHSFYNVLEKGARKTPQVFFAGNSISSSYLHDLIEVVGDRDFSVNVISKSGTTTEPAIAFRVFKELLIKKYGEEGAKKRIYATTDKAKGALKTLSDNEGYETFVVPDDVGGRFSVLTAVGLLPIAVSGVDIDALMNGAAAASKDFDKPELKNNIAYQYAAARNVLYRKGKVTELLISYEPGLQYFNEWWKQLFGESEGKDKKGIYPSSANFSTDLHSIGQYIQDGRRNLFETVIKVDKPRHNLTINKEDVDLDGLNYLAGETVDFVNTKAFEGTLLAHTDGEVPNFVVEVPELDAYTFGYLVYFFEKAVAISGYLNGVNPFDQPGVEAYKANMFALLGKPGFEDKKAELEKRLND.

The active-site Proton donor is the Glu-290. Active-site residues include His-311 and Lys-425.

This sequence belongs to the GPI family.

The protein localises to the cytoplasm. It carries out the reaction alpha-D-glucose 6-phosphate = beta-D-fructose 6-phosphate. It participates in carbohydrate biosynthesis; gluconeogenesis. The protein operates within carbohydrate degradation; glycolysis; D-glyceraldehyde 3-phosphate and glycerone phosphate from D-glucose: step 2/4. In terms of biological role, catalyzes the reversible isomerization of glucose-6-phosphate to fructose-6-phosphate. In Listeria monocytogenes serovar 1/2a (strain ATCC BAA-679 / EGD-e), this protein is Glucose-6-phosphate isomerase.